Consider the following 609-residue polypeptide: Dihydroxy-acid dehydratase (609 aa).

Asp82 is a Mg(2+) binding site. Cys123 contributes to the [2Fe-2S] cluster binding site. Mg(2+) contacts are provided by Asp124 and Lys125. Residue Lys125 is modified to N6-carboxylysine. Cys192 lines the [2Fe-2S] cluster pocket. Glu489 contributes to the Mg(2+) binding site. Ser515 acts as the Proton acceptor in catalysis.

The protein belongs to the IlvD/Edd family. As to quaternary structure, homodimer. Requires [2Fe-2S] cluster as cofactor. Mg(2+) serves as cofactor.

The enzyme catalyses (2R)-2,3-dihydroxy-3-methylbutanoate = 3-methyl-2-oxobutanoate + H2O. It catalyses the reaction (2R,3R)-2,3-dihydroxy-3-methylpentanoate = (S)-3-methyl-2-oxopentanoate + H2O. It participates in amino-acid biosynthesis; L-isoleucine biosynthesis; L-isoleucine from 2-oxobutanoate: step 3/4. The protein operates within amino-acid biosynthesis; L-valine biosynthesis; L-valine from pyruvate: step 3/4. In terms of biological role, functions in the biosynthesis of branched-chain amino acids. Catalyzes the dehydration of (2R,3R)-2,3-dihydroxy-3-methylpentanoate (2,3-dihydroxy-3-methylvalerate) into 2-oxo-3-methylpentanoate (2-oxo-3-methylvalerate) and of (2R)-2,3-dihydroxy-3-methylbutanoate (2,3-dihydroxyisovalerate) into 2-oxo-3-methylbutanoate (2-oxoisovalerate), the penultimate precursor to L-isoleucine and L-valine, respectively. The polypeptide is Dihydroxy-acid dehydratase (Azobacteroides pseudotrichonymphae genomovar. CFP2).